The sequence spans 1433 residues: DNA-directed RNA polymerase subunit beta' (1433 aa).

The Zn(2+) site is built by cysteine 66, cysteine 68, cysteine 81, and cysteine 84. Residues aspartate 473, aspartate 475, and aspartate 477 each contribute to the Mg(2+) site. 4 residues coordinate Zn(2+): cysteine 815, cysteine 889, cysteine 896, and cysteine 899.

This sequence belongs to the RNA polymerase beta' chain family. The RNAP catalytic core consists of 2 alpha, 1 beta, 1 beta' and 1 omega subunit. When a sigma factor is associated with the core the holoenzyme is formed, which can initiate transcription. Mg(2+) is required as a cofactor. It depends on Zn(2+) as a cofactor.

The catalysed reaction is RNA(n) + a ribonucleoside 5'-triphosphate = RNA(n+1) + diphosphate. DNA-dependent RNA polymerase catalyzes the transcription of DNA into RNA using the four ribonucleoside triphosphates as substrates. In Porphyromonas gingivalis (strain ATCC 33277 / DSM 20709 / CIP 103683 / JCM 12257 / NCTC 11834 / 2561), this protein is DNA-directed RNA polymerase subunit beta'.